Reading from the N-terminus, the 602-residue chain is uncharacterized protein (602 aa).

The Helicase ATP-binding domain maps to 51-210 (QYLGTQPRDF…PFVSYQPDAD (160 aa)). A compositionally biased stretch (basic and acidic residues) spans 430-439 (PHRESAHDPL). 2 disordered regions span residues 430 to 452 (PHRE…TERG) and 518 to 538 (RAQL…ASVH). Polar residues predominate over residues 523 to 534 (KGATQPATSGAS).

The protein to M.leprae ML1624.

This is an uncharacterized protein from Mycobacterium tuberculosis (strain CDC 1551 / Oshkosh).